The primary structure comprises 101 residues: ATP-dependent Clp protease adapter protein ClpS (101 aa).

The protein belongs to the ClpS family. In terms of assembly, binds to the N-terminal domain of the chaperone ClpA.

Involved in the modulation of the specificity of the ClpAP-mediated ATP-dependent protein degradation. The polypeptide is ATP-dependent Clp protease adapter protein ClpS (Mycobacterium bovis (strain ATCC BAA-935 / AF2122/97)).